Here is a 273-residue protein sequence, read N- to C-terminus: Peroxiredoxin-4 (273 aa).

The N-terminal stretch at 1 to 40 (METWSKLLDGTTPSRRWRKLVLLLPPLLLFLLQTEALQGL) is a signal peptide. The Thioredoxin domain maps to 81 to 239 (AKISKPAPYW…TLRLVQAFQY (159 aa)). Residue cysteine 126 is the Cysteine sulfenic acid (-SOH) intermediate of the active site.

The protein belongs to the peroxiredoxin family. AhpC/Prx1 subfamily. In terms of assembly, homodimer; disulfide-linked, upon oxidation. 5 homodimers assemble to form a ring-like decamer. Post-translationally, the enzyme can be inactivated by further oxidation of the cysteine sulfenic acid (C(P)-SOH) to sulphinic acid (C(P)-SO2H) and sulphonic acid (C(P)-SO3H) instead of its condensation to a disulfide bond.

The protein resides in the cytoplasm. It is found in the endoplasmic reticulum. Its subcellular location is the secreted. It carries out the reaction a hydroperoxide + [thioredoxin]-dithiol = an alcohol + [thioredoxin]-disulfide + H2O. Its function is as follows. Thiol-specific peroxidase that catalyzes the reduction of hydrogen peroxide and organic hydroperoxides to water and alcohols, respectively. Plays a role in cell protection against oxidative stress by detoxifying peroxides and as sensor of hydrogen peroxide-mediated signaling events. Regulates the activation of NF-kappa-B in the cytosol by a modulation of I-kappa-B-alpha phosphorylation. The sequence is that of Peroxiredoxin-4 (Prdx4) from Rattus norvegicus (Rat).